The chain runs to 80 residues: NAD(P)H-quinone oxidoreductase subunit O (80 aa).

Belongs to the complex I NdhO subunit family. In terms of assembly, NDH-1 can be composed of about 15 different subunits; different subcomplexes with different compositions have been identified which probably have different functions.

Its subcellular location is the cellular thylakoid membrane. The catalysed reaction is a plastoquinone + NADH + (n+1) H(+)(in) = a plastoquinol + NAD(+) + n H(+)(out). It catalyses the reaction a plastoquinone + NADPH + (n+1) H(+)(in) = a plastoquinol + NADP(+) + n H(+)(out). NDH-1 shuttles electrons from an unknown electron donor, via FMN and iron-sulfur (Fe-S) centers, to quinones in the respiratory and/or the photosynthetic chain. The immediate electron acceptor for the enzyme in this species is believed to be plastoquinone. Couples the redox reaction to proton translocation, and thus conserves the redox energy in a proton gradient. Cyanobacterial NDH-1 also plays a role in inorganic carbon-concentration. The protein is NAD(P)H-quinone oxidoreductase subunit O of Prochlorococcus marinus subsp. pastoris (strain CCMP1986 / NIES-2087 / MED4).